A 205-amino-acid polypeptide reads, in one-letter code: MIGKLTGLVDSQGEDHVILDVQGVGYIVFCSSRTLRLLPKPGASTALLIEMQVREDAIRLFGFPSEVERDWFRLLQSVQGVGAKVALALQGLLSATELAQAIALQDKASLGRAPGVGPKLAARLITELKDKMPALGPVDSLTAKLTIAEAEGTAPVAAQDAITALVNLGYGRPQAAAAVATSLEALGETAPLADLIRRGLKELAR.

The segment at 1–64 is domain I; sequence MIGKLTGLVD…EDAIRLFGFP (64 aa). A domain II region spans residues 65–143; the sequence is SEVERDWFRL…ALGPVDSLTA (79 aa). The tract at residues 144–153 is flexible linker; sequence KLTIAEAEGT. The tract at residues 153-205 is domain III; that stretch reads TAPVAAQDAITALVNLGYGRPQAAAAVATSLEALGETAPLADLIRRGLKELAR.

It belongs to the RuvA family. As to quaternary structure, homotetramer. Forms an RuvA(8)-RuvB(12)-Holliday junction (HJ) complex. HJ DNA is sandwiched between 2 RuvA tetramers; dsDNA enters through RuvA and exits via RuvB. An RuvB hexamer assembles on each DNA strand where it exits the tetramer. Each RuvB hexamer is contacted by two RuvA subunits (via domain III) on 2 adjacent RuvB subunits; this complex drives branch migration. In the full resolvosome a probable DNA-RuvA(4)-RuvB(12)-RuvC(2) complex forms which resolves the HJ.

It localises to the cytoplasm. Its function is as follows. The RuvA-RuvB-RuvC complex processes Holliday junction (HJ) DNA during genetic recombination and DNA repair, while the RuvA-RuvB complex plays an important role in the rescue of blocked DNA replication forks via replication fork reversal (RFR). RuvA specifically binds to HJ cruciform DNA, conferring on it an open structure. The RuvB hexamer acts as an ATP-dependent pump, pulling dsDNA into and through the RuvAB complex. HJ branch migration allows RuvC to scan DNA until it finds its consensus sequence, where it cleaves and resolves the cruciform DNA. The sequence is that of Holliday junction branch migration complex subunit RuvA from Beijerinckia indica subsp. indica (strain ATCC 9039 / DSM 1715 / NCIMB 8712).